The sequence spans 157 residues: MDRFVSTYTMRLDAKGRVSIPAPYRTVLAKDGTDLLHCHPSLAEPALDAGGTSLMAEIEALIARYPPYSEAREELAAALYGTTEMLRIDPEGRVVLTESLKTHAAIADQVTFVGLGHKFRIWEPERFRAHLAEAREKVRQLRRSLGSGSGNEGSISG.

2 consecutive SpoVT-AbrB domains span residues 7-54 and 83-126; these read TYTM…GTSL and TEML…EPER.

Belongs to the MraZ family. In terms of assembly, forms oligomers.

The protein resides in the cytoplasm. It is found in the nucleoid. The chain is Transcriptional regulator MraZ from Azorhizobium caulinodans (strain ATCC 43989 / DSM 5975 / JCM 20966 / LMG 6465 / NBRC 14845 / NCIMB 13405 / ORS 571).